The sequence spans 637 residues: Nuclear receptor-binding protein homolog (637 aa).

Residues 1–14 (MSNSQANAGISGST) are compositionally biased toward polar residues. Disordered regions lie at residues 1 to 60 (MSNS…TADA) and 74 to 99 (SEGV…ILEE). The span at 36–46 (PAATPPSQSTQ) shows a compositional bias: low complexity. The segment covering 88–98 (DDSEDESEILE) has biased composition (acidic residues). One can recognise a Protein kinase domain in the interval 109–375 (REEVDQRDVP…ANDLLFHPLL (267 aa)). Disordered stretches follow at residues 465–489 (PNFR…EPVD) and 617–637 (PQEQ…TTSN). Phosphoserine is present on residues Ser-473, Ser-479, and Ser-482. The residue at position 484 (Thr-484) is a Phosphothreonine.

This sequence belongs to the protein kinase superfamily. Ser/Thr protein kinase family.

The protein resides in the cytoplasm. It is found in the cell cortex. Functionally, may play a role in subcellular trafficking between the endoplasmic reticulum and Golgi apparatus. The sequence is that of Nuclear receptor-binding protein homolog from Drosophila melanogaster (Fruit fly).